The sequence spans 38 residues: Photosystem II reaction center protein X 1 (38 aa).

A helical transmembrane segment spans residues F8–F28.

This sequence belongs to the PsbX family. Type 1 subfamily. As to quaternary structure, PSII is composed of 1 copy each of membrane proteins PsbA, PsbB, PsbC, PsbD, PsbE, PsbF, PsbH, PsbI, PsbJ, PsbK, PsbL, PsbM, PsbT, PsbX, PsbY, PsbZ, Psb30/Ycf12, peripheral proteins PsbO, CyanoQ (PsbQ), PsbU, PsbV and a large number of cofactors. It forms dimeric complexes.

It is found in the cellular thylakoid membrane. Involved in the binding and/or turnover of quinones at the Q(B) site of photosystem II (PSII). PSII is a light-driven water plastoquinone oxidoreductase, using light energy to abstract electrons from H(2)O, generating a proton gradient subsequently used for ATP formation. The chain is Photosystem II reaction center protein X 1 from Synechococcus sp. (strain JA-3-3Ab) (Cyanobacteria bacterium Yellowstone A-Prime).